Consider the following 143-residue polypeptide: Fluoride-specific ion channel FluC (143 aa).

The next 4 helical transmembrane spans lie at 6–26 (CILV…VSVL), 38–58 (TILI…LTLA), 70–90 (LFVM…SLQT), and 103–123 (MVNV…GHVV). G78 and T81 together coordinate Na(+).

It belongs to the fluoride channel Fluc/FEX (TC 1.A.43) family.

It localises to the cell inner membrane. It catalyses the reaction fluoride(in) = fluoride(out). Na(+) is not transported, but it plays an essential structural role and its presence is essential for fluoride channel function. Fluoride-specific ion channel. Important for reducing fluoride concentration in the cell, thus reducing its toxicity. This is Fluoride-specific ion channel FluC from Methylobacterium radiotolerans (strain ATCC 27329 / DSM 1819 / JCM 2831 / NBRC 15690 / NCIMB 10815 / 0-1).